Consider the following 611-residue polypeptide: Major facilitator superfamily domain-containing protein YCR023C (611 aa).

Over Met-1–Lys-89 the chain is Extracellular. Residues Ile-90 to Arg-110 form a helical membrane-spanning segment. The Cytoplasmic segment spans residues Asn-111–Thr-152. The helical transmembrane segment at Met-153–Phe-173 threads the bilayer. Residues Arg-174–Ala-199 lie on the Extracellular side of the membrane. A helical transmembrane segment spans residues Leu-200–Leu-220. The Cytoplasmic portion of the chain corresponds to Glu-221–Lys-353. Over residues Asp-261–Glu-271 the composition is skewed to basic and acidic residues. Positions Asp-261 to Ile-301 are disordered. Ser-313 carries the phosphoserine modification. A helical transmembrane segment spans residues Val-354–Asn-372. Topologically, residues Glu-373 to Gly-413 are extracellular. The chain crosses the membrane as a helical span at residues Thr-414–Val-434. Over Asp-435–Thr-442 the chain is Cytoplasmic. A helical membrane pass occupies residues Ile-443–Phe-463. Topologically, residues Leu-464–Asp-542 are extracellular. The helical transmembrane segment at Val-543 to Tyr-563 threads the bilayer. Over Lys-564–Thr-611 the chain is Cytoplasmic. A Phosphoserine modification is found at Ser-603.

This sequence belongs to the major facilitator superfamily.

It is found in the membrane. The catalysed reaction is chloride(in) = chloride(out). In terms of biological role, outward-rectifying chloride channel involved in chloride homeostasis. This Saccharomyces cerevisiae (strain ATCC 204508 / S288c) (Baker's yeast) protein is Major facilitator superfamily domain-containing protein YCR023C.